A 931-amino-acid polypeptide reads, in one-letter code: Phosphoenolpyruvate carboxylase (931 aa).

Catalysis depends on residues histidine 138 and lysine 594.

It belongs to the PEPCase type 1 family. Requires Mg(2+) as cofactor.

The catalysed reaction is oxaloacetate + phosphate = phosphoenolpyruvate + hydrogencarbonate. In terms of biological role, forms oxaloacetate, a four-carbon dicarboxylic acid source for the tricarboxylic acid cycle. This Streptococcus agalactiae serotype Ia (strain ATCC 27591 / A909 / CDC SS700) protein is Phosphoenolpyruvate carboxylase.